The primary structure comprises 209 residues: High frequency lysogenization protein HflD homolog (209 aa).

Belongs to the HflD family.

It is found in the cytoplasm. It localises to the cell inner membrane. The protein is High frequency lysogenization protein HflD homolog of Marinomonas sp. (strain MWYL1).